Here is a 482-residue protein sequence, read N- to C-terminus: tRNA sulfurtransferase (482 aa).

Residues 61–165 (LAIRDALTRI…DDRLLLIKGR (105 aa)) enclose the THUMP domain. Residues 183-184 (LI), lysine 265, glycine 287, and glutamine 296 each bind ATP. Residues cysteine 344 and cysteine 456 are joined by a disulfide bond. The Rhodanese domain maps to 404-482 (FGPNDVILDI…GFNNVKVYRP (79 aa)). The Cysteine persulfide intermediate role is filled by cysteine 456.

The protein belongs to the ThiI family.

It localises to the cytoplasm. The catalysed reaction is [ThiI sulfur-carrier protein]-S-sulfanyl-L-cysteine + a uridine in tRNA + 2 reduced [2Fe-2S]-[ferredoxin] + ATP + H(+) = [ThiI sulfur-carrier protein]-L-cysteine + a 4-thiouridine in tRNA + 2 oxidized [2Fe-2S]-[ferredoxin] + AMP + diphosphate. It carries out the reaction [ThiS sulfur-carrier protein]-C-terminal Gly-Gly-AMP + S-sulfanyl-L-cysteinyl-[cysteine desulfurase] + AH2 = [ThiS sulfur-carrier protein]-C-terminal-Gly-aminoethanethioate + L-cysteinyl-[cysteine desulfurase] + A + AMP + 2 H(+). It participates in cofactor biosynthesis; thiamine diphosphate biosynthesis. Catalyzes the ATP-dependent transfer of a sulfur to tRNA to produce 4-thiouridine in position 8 of tRNAs, which functions as a near-UV photosensor. Also catalyzes the transfer of sulfur to the sulfur carrier protein ThiS, forming ThiS-thiocarboxylate. This is a step in the synthesis of thiazole, in the thiamine biosynthesis pathway. The sulfur is donated as persulfide by IscS. This chain is tRNA sulfurtransferase, found in Escherichia coli O8 (strain IAI1).